Reading from the N-terminus, the 476-residue chain is FAD-dependent monooxygenase dpasE (476 aa).

The signal sequence occupies residues methionine 1–alanine 21. Positions 35, 49, and 109 each coordinate FAD. Residues asparagine 190 and asparagine 219 are each glycosylated (N-linked (GlcNAc...) asparagine). Positions 308 and 321 each coordinate FAD. A helical membrane pass occupies residues glycine 441–methionine 461.

This sequence belongs to the paxM FAD-dependent monooxygenase family. The cofactor is FAD.

The protein localises to the membrane. It functions in the pathway secondary metabolite biosynthesis; terpenoid biosynthesis. Functionally, FAD-dependent monooxygenase; part of the gene cluster that mediates the biosynthesis of the diterpenoid pyrones subglutinols A and B. The first step of the pathway is the synthesis of the alpha-pyrone moiety by the polyketide synthase dpasA via condensation of one acetyl-CoA starter unit with 3 malonyl-CoA units and 2 methylations. The alpha-pyrone is then combined with geranylgeranyl pyrophosphate (GGPP) formed by the GGPP synthase dpasD through the action of the prenyltransferase dpasC to yield a linear alpha-pyrone diterpenoid. Subsequent steps in the diterpenoid pyrone biosynthetic pathway involve the decalin core formation, which is initiated by the epoxidation of the C10-C11 olefin by the FAD-dependent oxidoreductase dpasE, and is followed by a cyclization cascade catalyzed by the terpene cyclase dpasB. The FAD-linked oxidoreductase dpasF is then involved in tetrahydrofuran (THF) ring formation at the C5 unit to complete the formation of subglutinols A and B. DpasF possesses also an additional catalytic ability of multi-step oxidations to generate a new DDP analog with an enone system at the C5 named FDDP A. The protein is FAD-dependent monooxygenase dpasE of Apiospora sacchari (Arthrinium sacchari).